Consider the following 88-residue polypeptide: Small ribosomal subunit protein uS17 (88 aa).

The protein belongs to the universal ribosomal protein uS17 family. As to quaternary structure, part of the 30S ribosomal subunit.

One of the primary rRNA binding proteins, it binds specifically to the 5'-end of 16S ribosomal RNA. This is Small ribosomal subunit protein uS17 from Nitrosospira multiformis (strain ATCC 25196 / NCIMB 11849 / C 71).